The primary structure comprises 1323 residues: ABC transporter C family member 12 (1323 aa).

Residues 110 to 396 (HCISLFFYSI…LPILIALGIQ (287 aa)) enclose the ABC transmembrane type-1 1 domain. The next 6 membrane-spanning stretches (helical) occupy residues 111-131 (CISL…PEIL), 152-172 (MGYY…FCNY), 227-247 (VFGI…CLAL), 252-272 (IGWP…FNGL), 338-358 (ILIA…FSTY), and 375-395 (SYLN…ALGI). The ABC transporter 1 domain maps to 428–652 (VYMKNSTTTW…KLEFASLLQE (225 aa)). 464-471 (GSVGSGKS) contacts ATP. The tract at residues 657-695 (ENTKGDDSDDDDDKKDDDKKEEKVEKPKQSDKDGTLISE) is disordered. Basic and acidic residues predominate over residues 672–690 (DDDKKEEKVEKPKQSDKDG). 5 helical membrane passes run 712-732 (VTAG…LETG), 772-792 (IYIG…FSFF), 840-860 (LIAT…ATLI), 862-882 (ISII…LFFI), and 952-972 (WLGL…CIFI). The region spanning 720 to 1010 (FLFAMILFLL…GVLQAADTET (291 aa)) is the ABC transmembrane type-1 2 domain. Positions 1047 to 1281 (IKFDNLVMRY…QNGLLTWLVN (235 aa)) constitute an ABC transporter 2 domain. 1081 to 1088 (GRTGAGKS) provides a ligand contact to ATP.

Belongs to the ABC transporter superfamily. ABCC family. Conjugate transporter (TC 3.A.1.208) subfamily.

It is found in the membrane. In Dictyostelium discoideum (Social amoeba), this protein is ABC transporter C family member 12 (abcC12).